The chain runs to 543 residues: Thermosome subunit beta (543 aa).

A disordered region spans residues 522–543; the sequence is TKSSSSSSNPPKSGSSSESSED. Over residues 523–543 the composition is skewed to low complexity; sequence KSSSSSSNPPKSGSSSESSED.

Belongs to the TCP-1 chaperonin family. Forms a Heterooligomeric complex of two stacked eight-membered rings. Post-translationally, the N-terminus is blocked.

Molecular chaperone; binds unfolded polypeptides in vitro, and has a weak ATPase activity. The chain is Thermosome subunit beta (thsB) from Thermoplasma acidophilum (strain ATCC 25905 / DSM 1728 / JCM 9062 / NBRC 15155 / AMRC-C165).